A 480-amino-acid chain; its full sequence is MQETSIKRAGASAAASAAPAATVPATASASARKLYIRTFGCQMNEYDSDKMADVLRGDQGLELTDNPEDADVILFNTCSVREKAQEKVFSDLGRVQHLKKLNPDLVIGVGGCVASQEGEAIVKRAPYVDVVFGPQTLHRLPELIRRRRASGASQVDISFPEIEKFDALPPPRIEGATAFVSIMEGCSKYCSFCVVPYTRGEEVSRPFDDVLVEVADLADQGVKEVTLLGQNVNAYRGPMGDTGEIADFATLLEYVHEIPGIERIRYTTSHPKEMTQRMVDAYANLPKLVSFLHLPVQAGSDRVLAAMKRGYTTLEFKSVVRRLRAARPGLTLSSDFIVGFPGETEEDFDKTMKLIEDVGFDTSFSFIYSRRPGTPAADLVDDTPQEVKLRRLQQLQALINAQAAAIAQAMVGTRQRLLVEGPSRRDPNELMGRTENNRIVNFPAPARLIGQMVDVIITDAYPNSLRARVADVDGLAQGNA.

The MTTase N-terminal domain occupies 32-149 (RKLYIRTFGC…LPELIRRRRA (118 aa)). Positions 41, 78, 112, 186, 190, and 193 each coordinate [4Fe-4S] cluster. A Radical SAM core domain is found at 172 to 405 (RIEGATAFVS…QALINAQAAA (234 aa)). Residues 408–471 (QAMVGTRQRL…PNSLRARVAD (64 aa)) enclose the TRAM domain.

The protein belongs to the methylthiotransferase family. MiaB subfamily. Monomer. [4Fe-4S] cluster is required as a cofactor.

The protein localises to the cytoplasm. It catalyses the reaction N(6)-dimethylallyladenosine(37) in tRNA + (sulfur carrier)-SH + AH2 + 2 S-adenosyl-L-methionine = 2-methylsulfanyl-N(6)-dimethylallyladenosine(37) in tRNA + (sulfur carrier)-H + 5'-deoxyadenosine + L-methionine + A + S-adenosyl-L-homocysteine + 2 H(+). Catalyzes the methylthiolation of N6-(dimethylallyl)adenosine (i(6)A), leading to the formation of 2-methylthio-N6-(dimethylallyl)adenosine (ms(2)i(6)A) at position 37 in tRNAs that read codons beginning with uridine. This Bordetella petrii (strain ATCC BAA-461 / DSM 12804 / CCUG 43448) protein is tRNA-2-methylthio-N(6)-dimethylallyladenosine synthase.